A 2291-amino-acid polypeptide reads, in one-letter code: Protein Ycf2 B (2291 aa).

1642–1649 (GSIGTGRS) provides a ligand contact to ATP.

This sequence belongs to the Ycf2 family.

It localises to the plastid. The protein localises to the chloroplast stroma. Probable ATPase of unknown function. Its presence in a non-photosynthetic plant (Epifagus virginiana) and experiments in tobacco indicate that it has an essential function which is probably not related to photosynthesis. This is Protein Ycf2 B (ycf2-B) from Atropa belladonna (Belladonna).